The following is a 176-amino-acid chain: Endoribonuclease YbeY (176 aa).

3 residues coordinate Zn(2+): H139, H143, and H149.

The protein belongs to the endoribonuclease YbeY family. Requires Zn(2+) as cofactor.

It localises to the cytoplasm. Single strand-specific metallo-endoribonuclease involved in late-stage 70S ribosome quality control and in maturation of the 3' terminus of the 16S rRNA. The sequence is that of Endoribonuclease YbeY from Acaryochloris marina (strain MBIC 11017).